The following is a 207-amino-acid chain: Probable nicotinate-nucleotide adenylyltransferase (207 aa).

Belongs to the NadD family.

The catalysed reaction is nicotinate beta-D-ribonucleotide + ATP + H(+) = deamido-NAD(+) + diphosphate. It functions in the pathway cofactor biosynthesis; NAD(+) biosynthesis; deamido-NAD(+) from nicotinate D-ribonucleotide: step 1/1. Catalyzes the reversible adenylation of nicotinate mononucleotide (NaMN) to nicotinic acid adenine dinucleotide (NaAD). The polypeptide is Probable nicotinate-nucleotide adenylyltransferase (Desulfitobacterium hafniense (strain DSM 10664 / DCB-2)).